The chain runs to 605 residues: Methyl-CpG-binding domain protein 1 (605 aa).

The region spanning 1-69 (MAEDWLDCPA…TLFDFKQGIL (69 aa)) is the MBD domain. Residues 80–123 (AVASKKRKKPSRPAKTRKRQVGPQSGEVRKEAPRDETKADTDTA) form a disordered region. Residues 83–99 (SKKRKKPSRPAKTRKRQ) show a composition bias toward basic residues. Positions 84-88 (KKRKK) match the Nuclear localization signal motif. A compositionally biased stretch (basic and acidic residues) spans 106-120 (EVRKEAPRDETKADT). A Glycyl lysine isopeptide (Lys-Gly) (interchain with G-Cter in SUMO2) cross-link involves residue lysine 117. CXXC-type zinc fingers lie at residues 169–216 (RMFK…RRCL) and 217–263 (RIVE…RRCL). 16 residues coordinate Zn(2+): cysteine 176, cysteine 179, cysteine 182, cysteine 188, cysteine 191, cysteine 194, cysteine 210, cysteine 215, cysteine 225, cysteine 228, cysteine 231, cysteine 237, cysteine 240, cysteine 243, cysteine 257, and cysteine 262. The interval 269-308 (RRKGGCDSKMAARRRPGAQPLPPPPPSQSPEPTEPHPRAL) is disordered. Lysine 277 participates in a covalent cross-link: Glycyl lysine isopeptide (Lys-Gly) (interchain with G-Cter in SUMO2). Pro residues predominate over residues 287–297 (QPLPPPPPSQS). Serine 297 is modified (phosphoserine). Residues 330 to 378 (TNRRQNRKCGACAACLRRMDCGRCDFCCDKPKFGGSNQKRQKCRWRQCL) form a CXXC-type 3 zinc finger. Residues cysteine 338, cysteine 341, cysteine 344, cysteine 350, cysteine 353, cysteine 356, cysteine 372, and cysteine 377 each coordinate Zn(2+). Phosphoserine is present on residues serine 391 and serine 399. Residues 391–451 (SESEDGAGSP…EAGGGFVLPP (61 aa)) form a disordered region. A compositionally biased stretch (basic residues) spans 403 to 417 (YRRRKRPSSARRHHL). Residue lysine 422 forms a Glycyl lysine isopeptide (Lys-Gly) (interchain with G-Cter in SUMO2) linkage. Over residues 426-439 (ATRTAQPDHTQAPT) the composition is skewed to polar residues. A Glycyl lysine isopeptide (Lys-Gly) (interchain with G-Cter in SUMO2) cross-link involves residue lysine 440. Glycyl lysine isopeptide (Lys-Gly) (interchain with G-Cter in SUMO2); alternate cross-links involve residues lysine 499 and lysine 538. The interval 520–573 (VLVPGCPSKAVDPGLPSVKQEPPDPEEDKEENKDDSASKLAPEEEAGGAGTPVI) is disordered. Residues 529–592 (AVDPGLPSVK…RFRDTAVWLP (64 aa)) are transcriptional repression domain (TRD). Lysine 558 participates in a covalent cross-link: Glycyl lysine isopeptide (Lys-Gly) (interchain with G-Cter in SUMO2).

In terms of assembly, interacts with OASL, ATF7IP, ATF7IP2 and BAHD1. Binds CHAF1A and the SUV39H1-CBX5 complex via the MBD domain. Binds MGP via the TRD domain. May be part of the MeCP1 complex. Sumoylated, sumoylation may increase interaction with ATF7IP. Widely expressed.

Its subcellular location is the nucleus. The protein resides in the nucleus matrix. It localises to the nucleus speckle. It is found in the chromosome. Its function is as follows. Transcriptional repressor that binds CpG islands in promoters where the DNA is methylated at position 5 of cytosine within CpG dinucleotides. Binding is abolished by the presence of 7-mG that is produced by DNA damage by methylmethanesulfonate (MMS). Acts as transcriptional repressor and plays a role in gene silencing by recruiting ATF7IP, which in turn recruits factors such as the histone methyltransferase SETDB1. Probably forms a complex with SETDB1 and ATF7IP that represses transcription and couples DNA methylation and histone 'Lys-9' trimethylation. Isoform 1 and isoform 2 can also repress transcription from unmethylated promoters. In Homo sapiens (Human), this protein is Methyl-CpG-binding domain protein 1.